A 241-amino-acid polypeptide reads, in one-letter code: 3-deoxy-D-manno-octulosonic acid kinase (241 aa).

Residue Asp171 is part of the active site.

Belongs to the protein kinase superfamily. KdkA/RfaP family.

The protein localises to the cell inner membrane. The enzyme catalyses an alpha-Kdo-(2-&gt;6)-lipid IVA + ATP = a 4-O-phospho-alpha-Kdo-(2-&gt;6)-lipid IVA + ADP + H(+). It functions in the pathway bacterial outer membrane biogenesis; LPS core biosynthesis. Its function is as follows. Catalyzes the ATP-dependent phosphorylation of the 3-deoxy-D-manno-octulosonic acid (Kdo) residue in Kdo-lipid IV(A) at the 4-OH position. The polypeptide is 3-deoxy-D-manno-octulosonic acid kinase (Haemophilus influenzae (strain PittGG)).